Consider the following 198-residue polypeptide: Probable GTP-binding protein EngB (198 aa).

The EngB-type G domain occupies 22–195 (DLPEIALAGR…WKAIHKMTKT (174 aa)). Residues 30 to 37 (GRSNVGKS), 57 to 61 (GKTQT), 75 to 78 (DVPG), 142 to 145 (TKAD), and 174 to 176 (FSS) contribute to the GTP site. Mg(2+) is bound by residues Ser37 and Thr59.

It belongs to the TRAFAC class TrmE-Era-EngA-EngB-Septin-like GTPase superfamily. EngB GTPase family. The cofactor is Mg(2+).

Necessary for normal cell division and for the maintenance of normal septation. This chain is Probable GTP-binding protein EngB, found in Bacillus mycoides (strain KBAB4) (Bacillus weihenstephanensis).